Reading from the N-terminus, the 471-residue chain is Threonine--tRNA ligase catalytic subunit (471 aa).

The segment at 8–333 is catalytic; the sequence is THIDYAYELD…YLEHRRGRMP (326 aa). The Zn(2+) site is built by Cys112, His166, and His310.

This sequence belongs to the class-II aminoacyl-tRNA synthetase family. As to quaternary structure, homodimer. Probably interacts with its editing subunit. It depends on Zn(2+) as a cofactor.

Its subcellular location is the cytoplasm. It carries out the reaction tRNA(Thr) + L-threonine + ATP = L-threonyl-tRNA(Thr) + AMP + diphosphate + H(+). Catalyzes the attachment of threonine to tRNA(Thr) in a two-step reaction: L-threonine is first activated by ATP to form Thr-AMP and then transferred to the acceptor end of tRNA(Thr). This protein is probably not able to deacylate mischarged L-seryl-tRNA(Thr) as it lacks the appropriate domain. The polypeptide is Threonine--tRNA ligase catalytic subunit (Aeropyrum pernix (strain ATCC 700893 / DSM 11879 / JCM 9820 / NBRC 100138 / K1)).